The following is a 101-amino-acid chain: Small ribosomal subunit protein uS14 (101 aa).

It belongs to the universal ribosomal protein uS14 family. In terms of assembly, part of the 30S ribosomal subunit. Contacts proteins S3 and S10.

Binds 16S rRNA, required for the assembly of 30S particles and may also be responsible for determining the conformation of the 16S rRNA at the A site. In Shewanella sp. (strain MR-4), this protein is Small ribosomal subunit protein uS14.